Here is a 477-residue protein sequence, read N- to C-terminus: PTS system glucose-specific EIICB component (477 aa).

A PTS EIIC type-1 domain is found at 1 to 388; it reads MFKNVFSSLQ…FNLKTPGREE (388 aa). 9 helical membrane-spanning segments follow: residues 20–40, 51–71, 76–96, 112–132, 152–172, 250–270, 280–300, 304–324, and 354–374; these read VSVL…FTLI, TGGS…ALGF, GVAA…LSAV, NFSD…AYMF, FVPI…SLIW, LSGG…AIWH, IGSI…TEPI, FILV…LSFP, and IFLF…IFYF. One can recognise a PTS EIIB type-1 domain in the interval 399-477; sequence IEIAPYIVEA…TAIDEYINNI (79 aa). The Phosphocysteine intermediate; for EIIB activity role is filled by cysteine 421. Cysteine 421 bears the Phosphocysteine mark.

It is found in the cell inner membrane. It carries out the reaction N(pros)-phospho-L-histidyl-[protein] + D-glucose(out) = D-glucose 6-phosphate(in) + L-histidyl-[protein]. The phosphoenolpyruvate-dependent sugar phosphotransferase system (sugar PTS), a major carbohydrate active transport system, catalyzes the phosphorylation of incoming sugar substrates concomitantly with their translocation across the cell membrane. The enzyme II complex composed of PtsG and Crr is involved in glucose transport. The polypeptide is PTS system glucose-specific EIICB component (ptsG) (Buchnera aphidicola subsp. Schizaphis graminum (strain Sg)).